The sequence spans 428 residues: Histone deacetylase 3 (428 aa).

A histone deacetylase region spans residues 3 to 316 (NRTSYFYDPD…WTFETSLLLE (314 aa)). 1D-myo-inositol 1,4,5,6-tetrakisphosphate-binding residues include His17, Gly21, and Lys25. His135 is a catalytic residue. Zn(2+) is bound by residues Asp170, His172, and Asp259. Arg265 contributes to the 1D-myo-inositol 1,4,5,6-tetrakisphosphate binding site. The segment at 385-428 (LNYERNDEPDPDERGAEENYTRPEAANEFYDGDHDNDKESDVEI) is disordered. Composition is skewed to basic and acidic residues over residues 386 to 405 (NYER…ENYT) and 415 to 428 (DGDH…DVEI).

Belongs to the histone deacetylase family. HD type 1 subfamily.

Its subcellular location is the nucleus. The protein localises to the chromosome. It is found in the cytoplasm. The protein resides in the cytosol. It carries out the reaction N(6)-acetyl-L-lysyl-[histone] + H2O = L-lysyl-[histone] + acetate. Inositol tetraphosphate (1D-myo-inositol 1,4,5,6-tetrakisphosphate) promotes the histone deacetylase activity by acting as an intermolecular glue between hdac3 and N-Cor repressor complex components. In terms of biological role, responsible for the deacetylation of lysine residues on the N-terminal part of the core histones (H2A, H2B, H3 and H4). Histone deacetylation gives a tag for epigenetic repression and plays an important role in transcriptional regulation, cell cycle progression and developmental events. Histone deacetylases act via the formation of large multiprotein complexes, such as N-Cor repressor complex, which activate the histone deacetylase activity. May play a role in the regulation of the circadian clock in a deacetylase activity-independent manner. The protein is Histone deacetylase 3 (hdac3) of Tetraodon nigroviridis (Spotted green pufferfish).